Reading from the N-terminus, the 154-residue chain is Deoxyuridine 5'-triphosphate nucleotidohydrolase (154 aa).

Substrate is bound by residues 64-66 (RSG), Asn-77, 81-83 (TID), and Lys-91.

This sequence belongs to the dUTPase family. Homotrimer. It depends on Mg(2+) as a cofactor.

The catalysed reaction is dUTP + H2O = dUMP + diphosphate + H(+). The protein operates within pyrimidine metabolism; dUMP biosynthesis; dUMP from dCTP (dUTP route): step 2/2. In terms of biological role, this enzyme is involved in nucleotide metabolism: it produces dUMP, the immediate precursor of thymidine nucleotides and it decreases the intracellular concentration of dUTP so that uracil cannot be incorporated into DNA. This chain is Deoxyuridine 5'-triphosphate nucleotidohydrolase, found in Mycobacterium avium (strain 104).